A 103-amino-acid chain; its full sequence is Putative sulfurtransferase YtwF (103 aa).

Positions 17–100 (ADEELYLIDV…GMMAWEGETK (84 aa)) constitute a Rhodanese domain. C65 functions as the Cysteine persulfide intermediate in the catalytic mechanism.

This chain is Putative sulfurtransferase YtwF (ytwF), found in Bacillus subtilis (strain 168).